Here is a 1902-residue protein sequence, read N- to C-terminus: PII-type proteinase (1902 aa).

Positions 1–33 are cleaved as a signal peptide; it reads MQRKKKGLSILLAGTVALGALAVLPVGEIQAKA. Residues 34–187 constitute a propeptide that is removed on maturation; that stretch reads AISQQTKGSS…VTLAKVYYPT (154 aa). Residues 191-697 enclose the Peptidase S8 domain; it reads ANSMANVQAV…AGLVDVKAAI (507 aa). Catalysis depends on charge relay system residues Asp217, His281, and Ser620. Residues 1796-1874 form a disordered region; it reads GKGDGTTGTS…GALPKTGETT (79 aa). A compositionally biased stretch (gly residues) spans 1797–1812; the sequence is KGDGTTGTSDKGGGQG. The span at 1830 to 1843 shows a compositional bias: polar residues; that stretch reads SQPSSGGNIPTNPA. The LPXTG sorting signal motif lies at 1867–1871; the sequence is LPKTG. Pentaglycyl murein peptidoglycan amidated threonine is present on Thr1870. Residues 1871 to 1902 constitute a propeptide, removed by sortase; the sequence is GETTERPAFGFLGVIVVSLMGVLGLKRKQREE.

It belongs to the peptidase S8 family.

It is found in the secreted. It localises to the cell wall. It carries out the reaction Endopeptidase activity with very broad specificity, although some subsite preference have been noted, e.g. large hydrophobic residues in the P1 and P4 positions, and Pro in the P2 position. Best known for its action on caseins, although it has been shown to hydrolyze hemoglobin and oxidized insulin B-chain.. In terms of biological role, protease which breaks down milk proteins during the growth of the bacteria on milk. This chain is PII-type proteinase (prt), found in Lactococcus lactis subsp. cremoris (Streptococcus cremoris).